The following is a 547-amino-acid chain: MVQIKILVNCALPYANGPLHIGHIAGAYLGADVFVRYNRLMGNQVLYVSGSDEYGTPITVRAEKEGRSPKEIADIYYEEHLRTFENLGISFDIFMRTTWPEHSENAQDFFIKLLNEGYIEKGTMIAPFCRKIGRFMPDRYIEGTCPYCHYPKARGDQCDNCGRTLDPQDLIDPKCILSGETPEFRETEHFFLRLDLLEDRLKSWISSKNFWKPNVLAYTQNFISGGLKKRPITRDIDWGVKIPLDGYDSKRIYVWFEALIGYITGAKEYSKRTGNPDLWKEYYMDPEVRNYYFIGKDNIPFHAIIWPAMLMGYGGFNLPYDIPANEYLTFKGQQFSKSRGIGYSVDDLLKAVPADYLRYYVASILPETGDSDFSLEELVNTVNSDLIDKYGNLVYRILSFMDRYSINPDPVDVSGDEEFKYAQRSFELWSEDLSGVHVKRGLLRWLDLAIYANGFFNRSEPWKTIKNDRQKLNHDLYLSLKITEVLTVMVYPYIPSSAEKIWNMLGIPFAIGQSYRHLYEMHAFSVHRGAIPFEKIDLESLVSKLNN.

Positions 13–23 (PYANGPLHIGH) match the 'HIGH' region motif. The Zn(2+) site is built by Cys-145, Cys-148, Cys-158, and Cys-161. A 'KMSKS' region motif is present at residues 334–338 (QFSKS). Lys-337 is an ATP binding site.

The protein belongs to the class-I aminoacyl-tRNA synthetase family. MetG type 1 subfamily. It depends on Zn(2+) as a cofactor.

The protein resides in the cytoplasm. The catalysed reaction is tRNA(Met) + L-methionine + ATP = L-methionyl-tRNA(Met) + AMP + diphosphate. Is required not only for elongation of protein synthesis but also for the initiation of all mRNA translation through initiator tRNA(fMet) aminoacylation. This Thermoplasma acidophilum (strain ATCC 25905 / DSM 1728 / JCM 9062 / NBRC 15155 / AMRC-C165) protein is Methionine--tRNA ligase.